Reading from the N-terminus, the 239-residue chain is Uridylate kinase (239 aa).

ATP is bound at residue 13–16 (KLSG). UMP is bound at residue G55. ATP contacts are provided by G56 and R60. UMP contacts are provided by residues D75 and 136–143 (TGNPFFTT). Residues T163, N164, Y169, and D172 each coordinate ATP.

It belongs to the UMP kinase family. As to quaternary structure, homohexamer.

It localises to the cytoplasm. It carries out the reaction UMP + ATP = UDP + ADP. The protein operates within pyrimidine metabolism; CTP biosynthesis via de novo pathway; UDP from UMP (UMPK route): step 1/1. Inhibited by UTP. Its function is as follows. Catalyzes the reversible phosphorylation of UMP to UDP. In Neisseria meningitidis serogroup A / serotype 4A (strain DSM 15465 / Z2491), this protein is Uridylate kinase.